The sequence spans 538 residues: Prickle planar cell polarity protein 3-A (538 aa).

A PET domain is found at 66-175 (SGSQRDSLCE…CVRPVSGTMS (110 aa)). LIM zinc-binding domains are found at residues 177-241 (TVCQ…ELKR), 242-302 (PRCL…LYAQ), and 305-366 (DSCG…NATP). Polar residues predominate over residues 369–378 (SFSPSQTDLS). Disordered stretches follow at residues 369–398 (SFSP…DGDS), 433–463 (RGAP…TRVT), and 475–538 (SVSL…CLLS). Positions 435 to 449 (APKEFSRECPNRRSL) are enriched in basic and acidic residues. Over residues 451–463 (DLNSHTRTPTRVT) the composition is skewed to polar residues. 2 stretches are compositionally biased toward low complexity: residues 475–488 (SVSL…SSSS) and 514–523 (APPTHAPTST).

It belongs to the prickle / espinas / testin family. In terms of assembly, interacts with vangl2 via its C-terminus. The vangl2-dependent membrane recruitment of prickle3 is a prerequisite for its polarization. Interacts with wtip. Wtip is involved in the recruitment of prickle3 to the basal body. In terms of tissue distribution, predominantly expressed in the epidermal ectoderm.

It localises to the cytoplasm. The protein resides in the cell membrane. It is found in the mitochondrion. Involved in the planar cell polarity (PCP) pathway that is essential for the polarization of epithelial cells during morphogenetic processes, including gastrulation and neurulation. PCP is maintained by two molecular modules, the global and the core modules. Proteins of the core module include the proteins Frizzled (Fz), Disheveled (Dsh), Van Gogh (Vang), Prickle (Pk), Flamingo (Fmi, Celsr) and Diego (Dgo). The core module proteins develop subcellular asymmetry, accumulating in two groups on opposite sides of epithelial cells. Distinct proximal (Vang, Pk and Fmi) and distal (Fz, Dsh, Dgo and Fmi) complexes segregate to opposite sides of the cell, where they interact with the opposite complex in the neighboring cell at or near the adherents junctions. Directional information to orient polarization with respect to the tissue axes is provided by the global module which involves Wnt proteins. Involved in the organization of the basal body. Involved in cilia growth and positioning. Required for proper assembly, stability, and function of mitochondrial membrane ATP synthase (mitochondrial complex V). This is Prickle planar cell polarity protein 3-A (prickle3-a) from Xenopus laevis (African clawed frog).